The sequence spans 139 residues: Ribosomal RNA large subunit methyltransferase H (139 aa).

Residues L57, G88, and 107 to 112 (LSAMTF) each bind S-adenosyl-L-methionine.

The protein belongs to the RNA methyltransferase RlmH family. In terms of assembly, homodimer.

The protein localises to the cytoplasm. The enzyme catalyses pseudouridine(1915) in 23S rRNA + S-adenosyl-L-methionine = N(3)-methylpseudouridine(1915) in 23S rRNA + S-adenosyl-L-homocysteine + H(+). Its function is as follows. Specifically methylates the pseudouridine at position 1915 (m3Psi1915) in 23S rRNA. In Solibacter usitatus (strain Ellin6076), this protein is Ribosomal RNA large subunit methyltransferase H.